The following is a 391-amino-acid chain: Mannonate dehydratase (391 aa).

The tract at residues 334–359 (ERRRERDGGPRLPLRPDHGHHLLDDL) is disordered.

This sequence belongs to the mannonate dehydratase family. It depends on Fe(2+) as a cofactor. Mn(2+) serves as cofactor.

The catalysed reaction is D-mannonate = 2-dehydro-3-deoxy-D-gluconate + H2O. It participates in carbohydrate metabolism; pentose and glucuronate interconversion. Functionally, catalyzes the dehydration of D-mannonate. In Chromohalobacter salexigens (strain ATCC BAA-138 / DSM 3043 / CIP 106854 / NCIMB 13768 / 1H11), this protein is Mannonate dehydratase.